A 333-amino-acid chain; its full sequence is Ornithine carbamoyltransferase (333 aa).

Residues 57–60 (STRT), Q83, R107, and 134–137 (HPTQ) each bind carbamoyl phosphate. L-ornithine is bound by residues N168, D232, and 236–237 (SM). Carbamoyl phosphate contacts are provided by residues 274 to 275 (CL) and R319.

Belongs to the aspartate/ornithine carbamoyltransferase superfamily. OTCase family.

It is found in the cytoplasm. It catalyses the reaction carbamoyl phosphate + L-ornithine = L-citrulline + phosphate + H(+). The protein operates within amino-acid biosynthesis; L-arginine biosynthesis; L-arginine from L-ornithine and carbamoyl phosphate: step 1/3. Reversibly catalyzes the transfer of the carbamoyl group from carbamoyl phosphate (CP) to the N(epsilon) atom of ornithine (ORN) to produce L-citrulline. The chain is Ornithine carbamoyltransferase from Photobacterium profundum (strain SS9).